Consider the following 314-residue polypeptide: 2,3-dihydroxyphenylpropionate/2,3-dihydroxicinnamic acid 1,2-dioxygenase 2 (314 aa).

The active-site Proton donor is H115. H179 (proton acceptor) is an active-site residue.

The protein belongs to the LigB/MhpB extradiol dioxygenase family. As to quaternary structure, homotetramer. Requires Fe(2+) as cofactor.

It carries out the reaction 3-(2,3-dihydroxyphenyl)propanoate + O2 = (2Z,4E)-2-hydroxy-6-oxonona-2,4-dienedioate + H(+). The catalysed reaction is (2E)-3-(2,3-dihydroxyphenyl)prop-2-enoate + O2 = (2Z,4E,7E)-2-hydroxy-6-oxonona-2,4,7-trienedioate + H(+). It functions in the pathway aromatic compound metabolism; 3-phenylpropanoate degradation. In terms of biological role, catalyzes the non-heme iron(II)-dependent oxidative cleavage of 2,3-dihydroxyphenylpropionic acid and 2,3-dihydroxicinnamic acid into 2-hydroxy-6-ketononadienedioate and 2-hydroxy-6-ketononatrienedioate, respectively. The chain is 2,3-dihydroxyphenylpropionate/2,3-dihydroxicinnamic acid 1,2-dioxygenase 2 (mhpB2) from Pseudomonas putida (Arthrobacter siderocapsulatus).